The following is a 494-amino-acid chain: tRNA (guanine(37)-N(1))-methyltransferase (494 aa).

A mitochondrion-targeting transit peptide spans 1-32; sequence MRIRRILYFYGNLPNTYTANVLRRLAFSCWHT. Residues H278, 316 to 317, 344 to 345, and N377 contribute to the S-adenosyl-L-methionine site; these read DL and DG. The interval 468–494 is disordered; it reads DTGEPESKRPRTAEAFPLPHVQQSRNS.

The protein belongs to the class I-like SAM-binding methyltransferase superfamily. TRM5/TYW2 family. As to quaternary structure, monomer.

The protein localises to the mitochondrion matrix. The protein resides in the nucleus. Its subcellular location is the cytoplasm. The catalysed reaction is guanosine(37) in tRNA + S-adenosyl-L-methionine = N(1)-methylguanosine(37) in tRNA + S-adenosyl-L-homocysteine + H(+). Functionally, involved in mitochondrial tRNA methylation. Specifically methylates the N1 position of guanosine-37 in various tRNAs. Methylation is not dependent on the nature of the nucleoside 5' of the target nucleoside. This is the first step in the biosynthesis of wybutosine (yW), a modified base adjacent to the anticodon of tRNAs and required for accurate decoding. This Xenopus tropicalis (Western clawed frog) protein is tRNA (guanine(37)-N(1))-methyltransferase (trmt5).